We begin with the raw amino-acid sequence, 312 residues long: Aquaporin-6 (312 aa).

Residues 1-50 are Cytoplasmic-facing; the sequence is MDDKFDDDALPNSKTTAKDYEDKLPEYDYTTTFPNTWMRLREPFREYFAE. A helical transmembrane segment spans residues 51–71; that stretch reads FVGVAVLIIFGVGADCQVVLS. The Extracellular segment spans residues 72 to 89; sequence ANTGVASSPKGSYLSLNC. The helical transmembrane segment at 90–110 threads the bilayer; it reads GWAIGTAMGVWISGGISGGHI. The NPA 1 signature appears at 111–113; sequence NPA. The Cytoplasmic segment spans residues 111 to 128; the sequence is NPAVTLAMATWRGFPWWK. A helical transmembrane segment spans residues 129-149; sequence VPGFIFAQLLGGIVGAGLVYV. Residues 150-183 lie on the Extracellular side of the membrane; it reads NYIHAIDIVEGGRHIRTLDTAGLFATYAADYMTN. N-linked (GlcNAc...) asparagine glycosylation is present at asparagine 183. The chain crosses the membrane as a helical span at residues 184–204; that stretch reads LSCFFSEFLATAVLIIVIHAM. Topologically, residues 205–213 are cytoplasmic; sequence NDKRNTPPP. A helical membrane pass occupies residues 214 to 234; the sequence is AGIVPFVLFFLILGIGASLGM. The Extracellular portion of the chain corresponds to 235–267; the sequence is ETGYAINPARDLGPRMLTAMVGYGRQVFAFRNQ. The NPA 2 motif lies at 241-243; the sequence is NPA. Residues 268 to 288 traverse the membrane as a helical segment; sequence YWIWCPVLAPFLGAQVGTIFY. Over 289–312 the chain is Cytoplasmic; that stretch reads DLFFYKGQDNVFGRLGSHIHISPA.

It belongs to the MIP/aquaporin (TC 1.A.8) family.

The protein resides in the membrane. It carries out the reaction H2O(in) = H2O(out). Its function is as follows. Water channel required to facilitate the transport of water across membranes. Does not mediate the transport carbon dioxide nor nitric oxide across the membrane. Plays a key role in root water transport of mycorrhizal plant such ectomycorrhizal white spruce or trembling aspen via the hydration at the hyphal-root interphase. Contributes in fungal cellular processes during the basidiocarp formation. This chain is Aquaporin-6, found in Laccaria bicolor (Bicoloured deceiver).